The following is a 122-amino-acid chain: Truncated CrmB protein (122 aa).

In terms of biological role, the protein is truncated in this strain and presumably inactive. It has similarities with variola virus CrmB, but the product is inactivated due to several premature stop codons. In Bos taurus (Bovine), this protein is Truncated CrmB protein (OPG002).